The sequence spans 58 residues: Large ribosomal subunit protein bL32 (58 aa).

It belongs to the bacterial ribosomal protein bL32 family.

This chain is Large ribosomal subunit protein bL32, found in Caldicellulosiruptor saccharolyticus (strain ATCC 43494 / DSM 8903 / Tp8T 6331).